We begin with the raw amino-acid sequence, 131 residues long: Type-5 thionin (131 aa).

Residues methionine 1–glycine 29 form the signal peptide. A propeptide spans leucine 67 to aspartate 131 (acidic domain).

The protein belongs to the plant thionin (TC 1.C.44) family. In terms of processing, is disulfide-linked. In terms of tissue distribution, developing endosperm.

Its subcellular location is the secreted. Thionins are small plant proteins which are toxic to animal cells. They seem to exert their toxic effect at the level of the cell membrane. Their precise function is not known. This is Type-5 thionin (TTHV) from Triticum aestivum (Wheat).